An 838-amino-acid chain; its full sequence is Alpha-glucan phosphorylase, H isozyme (838 aa).

A disordered region spans residues 1-21 (MEGGAKSNDVSAAPIAQPLSE). Lys684 is subject to N6-(pyridoxal phosphate)lysine.

The protein belongs to the glycogen phosphorylase family. Pyridoxal 5'-phosphate serves as cofactor.

Its subcellular location is the cytoplasm. It catalyses the reaction [(1-&gt;4)-alpha-D-glucosyl](n) + phosphate = [(1-&gt;4)-alpha-D-glucosyl](n-1) + alpha-D-glucose 1-phosphate. Functionally, phosphorylase is an important allosteric enzyme in carbohydrate metabolism. Enzymes from different sources differ in their regulatory mechanisms and in their natural substrates. However, all known phosphorylases share catalytic and structural properties. This chain is Alpha-glucan phosphorylase, H isozyme, found in Solanum tuberosum (Potato).